The chain runs to 305 residues: tRNA pseudouridine synthase B (305 aa).

Aspartate 50 serves as the catalytic Nucleophile.

Belongs to the pseudouridine synthase TruB family. Type 1 subfamily.

The enzyme catalyses uridine(55) in tRNA = pseudouridine(55) in tRNA. Its function is as follows. Responsible for synthesis of pseudouridine from uracil-55 in the psi GC loop of transfer RNAs. The chain is tRNA pseudouridine synthase B from Rhodococcus jostii (strain RHA1).